We begin with the raw amino-acid sequence, 185 residues long: Ribosome-recycling factor (185 aa).

Belongs to the RRF family.

Its subcellular location is the cytoplasm. Its function is as follows. Responsible for the release of ribosomes from messenger RNA at the termination of protein biosynthesis. May increase the efficiency of translation by recycling ribosomes from one round of translation to another. The polypeptide is Ribosome-recycling factor (Bacillus mycoides (strain KBAB4) (Bacillus weihenstephanensis)).